Consider the following 199-residue polypeptide: dITP/XTP pyrophosphatase (199 aa).

A substrate-binding site is contributed by 7-12 (TGNAGK). Glu37 and Asp66 together coordinate Mg(2+). Asp66 acts as the Proton acceptor in catalysis. Substrate-binding positions include Ser67, 146–149 (FGYD), Lys169, and 174–175 (HR).

It belongs to the HAM1 NTPase family. In terms of assembly, homodimer. The cofactor is Mg(2+).

It carries out the reaction XTP + H2O = XMP + diphosphate + H(+). The catalysed reaction is dITP + H2O = dIMP + diphosphate + H(+). It catalyses the reaction ITP + H2O = IMP + diphosphate + H(+). Functionally, pyrophosphatase that catalyzes the hydrolysis of nucleoside triphosphates to their monophosphate derivatives, with a high preference for the non-canonical purine nucleotides XTP (xanthosine triphosphate), dITP (deoxyinosine triphosphate) and ITP. Seems to function as a house-cleaning enzyme that removes non-canonical purine nucleotides from the nucleotide pool, thus preventing their incorporation into DNA/RNA and avoiding chromosomal lesions. The polypeptide is dITP/XTP pyrophosphatase (Deinococcus geothermalis (strain DSM 11300 / CIP 105573 / AG-3a)).